Here is a 40-residue protein sequence, read N- to C-terminus: Large ribosomal subunit protein bL36 (40 aa).

Belongs to the bacterial ribosomal protein bL36 family.

The sequence is that of Large ribosomal subunit protein bL36 from Corynebacterium urealyticum (strain ATCC 43042 / DSM 7109).